A 277-amino-acid chain; its full sequence is MKVQDLHLDYHLVEDILKAFLFNELRKFGFSSVVLGLSGGIDSAVVCELAVRALGRQNVLGLMMPYASSSMESLEHAELMIKKLGIQAEEMPITPVVDAFFSSVPENQLLRRGNIMARTRMILLYDVSARDGRLVTGTSNKTELLLGYGTLFGDMASAINPIGDLYKTQVRGLARHLAIPEPLIVKAPSADLWEGQSDEDDLGFSYEAVDLLLYMMLEKRMDKHAILGQGIEEPFYDRVRKMVVRNQYKRMMPVIAKLSGRTPGIDFRYARDWQEVR.

Gly36 to Ser43 provides a ligand contact to ATP. Asp42 serves as a coordination point for Mg(2+). Arg118 contacts deamido-NAD(+). Position 138 (Thr138) interacts with ATP. Glu143 is a binding site for Mg(2+). Lys167 and Ser189 together coordinate ATP.

The protein belongs to the NAD synthetase family. In terms of assembly, homodimer.

The enzyme catalyses deamido-NAD(+) + NH4(+) + ATP = AMP + diphosphate + NAD(+) + H(+). The protein operates within cofactor biosynthesis; NAD(+) biosynthesis; NAD(+) from deamido-NAD(+) (ammonia route): step 1/1. Its function is as follows. Catalyzes the ATP-dependent amidation of deamido-NAD to form NAD. Uses ammonia as a nitrogen source. This chain is NH(3)-dependent NAD(+) synthetase, found in Pelodictyon phaeoclathratiforme (strain DSM 5477 / BU-1).